The chain runs to 119 residues: Small ribosomal subunit protein uS13m (119 aa).

This sequence belongs to the universal ribosomal protein uS13 family. Part of the small ribosomal subunit.

The protein resides in the mitochondrion. In terms of biological role, located at the top of the head of the small subunit, it contacts several helices of the small subunit rRNA. This Acanthamoeba castellanii (Amoeba) protein is Small ribosomal subunit protein uS13m (RPS13).